The primary structure comprises 181 residues: uncharacterized protein (181 aa).

This is an uncharacterized protein from Methanocaldococcus jannaschii (strain ATCC 43067 / DSM 2661 / JAL-1 / JCM 10045 / NBRC 100440) (Methanococcus jannaschii).